The sequence spans 494 residues: GPI alpha-1,6-mannosyltransferase 2 (494 aa).

Residues 1 to 13 (MWSLDPSQKEVLR) lie on the Cytoplasmic side of the membrane. A helical transmembrane segment spans residues 14 to 34 (FAVSCRILTLMLQALFNIIIP). At 35 to 77 (DHHADAFSPPRLASSCSVDQLVEGLLGGLSRWDAEHFLFIAEH) the chain is on the lumenal side. A helical transmembrane segment spans residues 78 to 98 (GYLYEHNFAFFPGFPLALLMG). At 99–113 (TELLRPLQGLLSQRS) the chain is on the cytoplasmic side. The chain crosses the membrane as a helical span at residues 114 to 134 (CLLVSVALLNFLFSVLAAVTL). The Lumenal portion of the chain corresponds to 135–136 (HD). Residues 137–157 (LGCLVLGCPRQAFYAAMLFCL) traverse the membrane as a helical segment. Over 158–161 (SPAN) the chain is Cytoplasmic. Residues 162–182 (VFLAAGYSEALFAFLTFSAMG) traverse the membrane as a helical segment. Residues 183–192 (QLERGRSWAS) are Lumenal-facing. A helical transmembrane segment spans residues 193–213 (GLLFALATGVRSNGLVSVGFL). The Cytoplasmic segment spans residues 214 to 234 (LHAQCRGFFSSLVVLNPLKPL). Residues 235-255 (FKLMASLCLSVLTVSLPFALF) form a helical membrane-spanning segment. The Lumenal portion of the chain corresponds to 256–327 (QYYAYTQFCL…RYYELRQVPN (72 aa)). A helical membrane pass occupies residues 328–348 (FLLATPVAVLVVWAAWTYVTT). Topologically, residues 349 to 379 (HPWLCLTLGLRRSKDSKKTLEKPHPGFLSPK) are cytoplasmic. Residues 380-400 (VFVYLVHAAGLLLFGSLCMHV) traverse the membrane as a helical segment. Topologically, residues 401–470 (QVLTRLLCSS…NWRACSPVTR (70 aa)) are lumenal. The chain crosses the membrane as a helical span at residues 471–491 (CILGYFLTYWLLGLLLHCNFL). Residues 492 to 494 (PWT) lie on the Cytoplasmic side of the membrane.

This sequence belongs to the PIGV family. In terms of processing, not N-glycosylated.

The protein localises to the endoplasmic reticulum membrane. Its pathway is glycolipid biosynthesis; glycosylphosphatidylinositol-anchor biosynthesis. In terms of biological role, alpha-1,6-mannosyltransferase that catalyzes the transfer of the second mannose, via an alpha-1,6 bond, from a dolichol-phosphate-mannose (Dol-P-Man) to the alpha-D-Man-(1-&gt;4)-alpha-D-GlcN-(1-&gt;6)-(1-radyl,2-acyl-sn-glycero-3-phospho)-2-acyl-inositol intermediate to generate an alpha-D-Man-(1-&gt;6)-alpha-D-Man-(1-&gt;4)-alpha-D-GlcN-(1-&gt;6)-(1-radyl,2-acyl-sn-glycero-3-phospho)-2-acyl-inositol and participates in the seventh step of the glycosylphosphatidylinositol-anchor biosynthesis. Also transfers the second mannose on a 2-PEtn-alpha-D-Man-(1-&gt;4)-alpha-D-GlcN-(1-&gt;6)-(1-radyl,2-acyl-sn-glycero-3-phospho)-2-acyl-inositol. In Cricetulus griseus (Chinese hamster), this protein is GPI alpha-1,6-mannosyltransferase 2.